Consider the following 152-residue polypeptide: Large ribosomal subunit protein bL9 (152 aa).

This sequence belongs to the bacterial ribosomal protein bL9 family.

In terms of biological role, binds to the 23S rRNA. The protein is Large ribosomal subunit protein bL9 of Mycobacterium ulcerans (strain Agy99).